An 862-amino-acid polypeptide reads, in one-letter code: DNA mismatch repair protein MutS (862 aa).

608-615 (GPNMAGKS) is an ATP binding site.

This sequence belongs to the DNA mismatch repair MutS family.

In terms of biological role, this protein is involved in the repair of mismatches in DNA. It is possible that it carries out the mismatch recognition step. This protein has a weak ATPase activity. This chain is DNA mismatch repair protein MutS, found in Borrelia garinii subsp. bavariensis (strain ATCC BAA-2496 / DSM 23469 / PBi) (Borreliella bavariensis).